A 489-amino-acid chain; its full sequence is Adenylosuccinate synthetase 2, chloroplastic (489 aa).

The N-terminal 45 residues, 1–45, are a transit peptide targeting the chloroplast; that stretch reads MPFSPPCLDPAAAAAASLSFLPAAAARPPAPCAVAPRSRRALRVA. GTP-binding positions include 76–82 and 104–106; these read GDEGKGK and GHT. The active-site Proton acceptor is aspartate 77. The Mg(2+) site is built by aspartate 77 and glycine 104. IMP-binding positions include 77 to 80, 102 to 105, threonine 194, arginine 208, glutamine 288, threonine 303, and arginine 367; these read DEGK and NAGH. The active-site Proton donor is the histidine 105. 363 to 369 provides a ligand contact to substrate; that stretch reads TTTGRPR. Residues arginine 369, 395 to 397, and 478 to 480 each bind GTP; these read KLD and GVG.

Belongs to the adenylosuccinate synthetase family. As to quaternary structure, homodimer. It depends on Mg(2+) as a cofactor.

The protein localises to the plastid. The protein resides in the chloroplast. It catalyses the reaction IMP + L-aspartate + GTP = N(6)-(1,2-dicarboxyethyl)-AMP + GDP + phosphate + 2 H(+). Its pathway is purine metabolism; AMP biosynthesis via de novo pathway; AMP from IMP: step 1/2. Plays an important role in the de novo pathway and in the salvage pathway of purine nucleotide biosynthesis. Catalyzes the first committed step in the biosynthesis of AMP from IMP. This chain is Adenylosuccinate synthetase 2, chloroplastic, found in Oryza sativa subsp. japonica (Rice).